We begin with the raw amino-acid sequence, 532 residues long: MSFPDFSASDAQIQWQRFCDLLWYHDDLGLWLDVSRMHLNASELEALQPAMDRAFTAMHELEAGAIANPDEERQVGHYWLRNPQLAPSDDLRTHIAREVDDIEAFGRGVVHGEIKAPSGVPFTDVLWIGIGGSGLGPALMIRALKNNNQGLPFHFLDNVDPNGMSNVLGGLAGRFKTTLVVTVSKSGGTPEPHIGMEQARLKLEAAGGKWAGQAVAITMLNSRLDQQAQQEAWLKRFDMFDWVGGRTSITSAVGLLPGALIGCDIRDFLAGAAQMDEATRVADSRRNPAALMAASWYVAGEGKGRRDMVVLPYRDRLEVFSRYLQQLVMESLGKRLDRDGNVVHQGIAVYGNKGSTDQHAYVQQLRDGVDNFFATFIEELEDSEDIPVIKNERPGDFLDGFLQGTRSALTEGGRQNMTITMRCFDERRLGALVALFERAVGLYGELVNVNAYHQPGVEAGKKAAAAILDLQQRVEEVLQDGVPRTVSEIRQVLDDGSDESIFWIMRHLTGNKRQYNAQGDWSSPAGMRFSKD.

Glu330 functions as the Proton donor in the catalytic mechanism. Residues His359 and Lys461 contribute to the active site.

This sequence belongs to the GPI family.

The protein localises to the cytoplasm. The catalysed reaction is alpha-D-glucose 6-phosphate = beta-D-fructose 6-phosphate. Its pathway is carbohydrate biosynthesis; gluconeogenesis. The protein operates within carbohydrate degradation; glycolysis; D-glyceraldehyde 3-phosphate and glycerone phosphate from D-glucose: step 2/4. Functionally, catalyzes the reversible isomerization of glucose-6-phosphate to fructose-6-phosphate. The sequence is that of Glucose-6-phosphate isomerase from Synechococcus sp. (strain CC9902).